The sequence spans 202 residues: Recombination protein RecR (202 aa).

Residues 57–72 (CGVCRTFTEQPCCDIC) form a C4-type zinc finger. Residues 81-176 (GQICVVESPS…STTKIAHGVP (96 aa)) enclose the Toprim domain.

Belongs to the RecR family.

Its function is as follows. May play a role in DNA repair. It seems to be involved in an RecBC-independent recombinational process of DNA repair. It may act with RecF and RecO. This is Recombination protein RecR from Hamiltonella defensa subsp. Acyrthosiphon pisum (strain 5AT).